The sequence spans 342 residues: RNA 3'-terminal phosphate cyclase (342 aa).

The protein belongs to the RNA 3'-terminal cyclase family. Type 1 subfamily.

The protein localises to the cytoplasm. The catalysed reaction is a 3'-end 3'-phospho-ribonucleotide-RNA + GTP = a 3'-end 2',3'-cyclophospho-ribonucleotide-RNA + GMP + diphosphate. Its activity is regulated as follows. Inhibited by GMP. Catalyzes the GTP-dependent conversion of 3'-phosphate to a 2',3'-cyclic phosphodiester at the end of RNA. The biological role of this enzyme is unknown but it is likely to function in some aspects of cellular RNA processing. The chain is RNA 3'-terminal phosphate cyclase from Pyrococcus furiosus (strain ATCC 43587 / DSM 3638 / JCM 8422 / Vc1).